The sequence spans 308 residues: uncharacterized protein (308 aa).

The active site involves E59.

Belongs to the PhzF family.

This is an uncharacterized protein from Deinococcus radiodurans (strain ATCC 13939 / DSM 20539 / JCM 16871 / CCUG 27074 / LMG 4051 / NBRC 15346 / NCIMB 9279 / VKM B-1422 / R1).